The following is a 197-amino-acid chain: Holliday junction branch migration complex subunit RuvA (197 aa).

Residues 1-64 (MYEYIKGKYI…EDFIGVYGFL (64 aa)) form a domain I region. The interval 65-144 (TKDELSMFKL…DILEEDDEQI (80 aa)) is domain II. Residues 145 to 149 (INKVA) form a flexible linker region. Residues 149-197 (ADDKKVLEAVAALVTLGYSEKEANKVINSCDKNNSLEQIIKEALKYLMK) form a domain III region.

This sequence belongs to the RuvA family. Homotetramer. Forms an RuvA(8)-RuvB(12)-Holliday junction (HJ) complex. HJ DNA is sandwiched between 2 RuvA tetramers; dsDNA enters through RuvA and exits via RuvB. An RuvB hexamer assembles on each DNA strand where it exits the tetramer. Each RuvB hexamer is contacted by two RuvA subunits (via domain III) on 2 adjacent RuvB subunits; this complex drives branch migration. In the full resolvosome a probable DNA-RuvA(4)-RuvB(12)-RuvC(2) complex forms which resolves the HJ.

It is found in the cytoplasm. Functionally, the RuvA-RuvB-RuvC complex processes Holliday junction (HJ) DNA during genetic recombination and DNA repair, while the RuvA-RuvB complex plays an important role in the rescue of blocked DNA replication forks via replication fork reversal (RFR). RuvA specifically binds to HJ cruciform DNA, conferring on it an open structure. The RuvB hexamer acts as an ATP-dependent pump, pulling dsDNA into and through the RuvAB complex. HJ branch migration allows RuvC to scan DNA until it finds its consensus sequence, where it cleaves and resolves the cruciform DNA. The sequence is that of Holliday junction branch migration complex subunit RuvA from Clostridium botulinum (strain ATCC 19397 / Type A).